The primary structure comprises 274 residues: NADPH-dependent 7-cyano-7-deazaguanine reductase (274 aa).

80 to 82 (VES) contacts substrate. An NADPH-binding site is contributed by 82-83 (SK). Cys-181 (thioimide intermediate) is an active-site residue. The Proton donor role is filled by Asp-188. 220 to 221 (HE) serves as a coordination point for substrate. 249–250 (RG) lines the NADPH pocket.

This sequence belongs to the GTP cyclohydrolase I family. QueF type 2 subfamily. Homodimer.

The protein localises to the cytoplasm. The catalysed reaction is 7-aminomethyl-7-carbaguanine + 2 NADP(+) = 7-cyano-7-deazaguanine + 2 NADPH + 3 H(+). Its pathway is tRNA modification; tRNA-queuosine biosynthesis. In terms of biological role, catalyzes the NADPH-dependent reduction of 7-cyano-7-deazaguanine (preQ0) to 7-aminomethyl-7-deazaguanine (preQ1). The polypeptide is NADPH-dependent 7-cyano-7-deazaguanine reductase (Burkholderia pseudomallei (strain 1106a)).